The primary structure comprises 705 residues: Ribosomal RNA large subunit methyltransferase K/L (705 aa).

Positions 42-154 (LAQKVCLSTR…RYGVSMYIDY (113 aa)) constitute a THUMP domain.

It belongs to the methyltransferase superfamily. RlmKL family.

The protein localises to the cytoplasm. The catalysed reaction is guanosine(2445) in 23S rRNA + S-adenosyl-L-methionine = N(2)-methylguanosine(2445) in 23S rRNA + S-adenosyl-L-homocysteine + H(+). It carries out the reaction guanosine(2069) in 23S rRNA + S-adenosyl-L-methionine = N(2)-methylguanosine(2069) in 23S rRNA + S-adenosyl-L-homocysteine + H(+). Functionally, specifically methylates the guanine in position 2445 (m2G2445) and the guanine in position 2069 (m7G2069) of 23S rRNA. This Pseudoalteromonas translucida (strain TAC 125) protein is Ribosomal RNA large subunit methyltransferase K/L.